Consider the following 317-residue polypeptide: Protoheme IX farnesyltransferase (317 aa).

Helical transmembrane passes span 39–58, 62–84, 100–120, 123–143, 160–180, 184–204, 233–253, 256–276, and 293–313; these read VMSL…PGSL, LGAI…NMWY, IPAG…LAVG, LVMW…AIFF, IVIG…AVTG, LMPV…FWSL, IMAY…LGDT, VYGL…WRVL, and ARAA…ALAV.

This sequence belongs to the UbiA prenyltransferase family. Protoheme IX farnesyltransferase subfamily.

It localises to the cell inner membrane. It carries out the reaction heme b + (2E,6E)-farnesyl diphosphate + H2O = Fe(II)-heme o + diphosphate. It participates in porphyrin-containing compound metabolism; heme O biosynthesis; heme O from protoheme: step 1/1. Converts heme B (protoheme IX) to heme O by substitution of the vinyl group on carbon 2 of heme B porphyrin ring with a hydroxyethyl farnesyl side group. This Granulibacter bethesdensis (strain ATCC BAA-1260 / CGDNIH1) protein is Protoheme IX farnesyltransferase.